Consider the following 190-residue polypeptide: Homeobox protein SEBOX (190 aa).

Positions 1–11 (MPSPVDASSAD) are enriched in low complexity. 2 disordered regions span residues 1–24 (MPSPVDASSADGGSGLGSHRRKRT) and 82–161 (ILSP…VHPS). The segment at residues 19-78 (HRRKRTTFSKGQLLELERAFAAWPYPNISTHEHLAWVTCLPEAKVQVWFQKRWAKIIKNR) is a DNA-binding region (homeobox). Residues 89–100 (CPQSSCSLPDTL) show a composition bias toward polar residues.

It belongs to the paired homeobox family.

It is found in the nucleus. Functionally, probable transcription factor involved in the control of specification of mesoderm and endoderm. This Homo sapiens (Human) protein is Homeobox protein SEBOX (SEBOX).